Here is a 207-residue protein sequence, read N- to C-terminus: Guanylate kinase (207 aa).

One can recognise a Guanylate kinase-like domain in the interval 6–185; the sequence is GLLIVLSGPS…AKNRIQSIVE (180 aa). An ATP-binding site is contributed by 13–20; it reads GPSGVGKG.

Belongs to the guanylate kinase family.

It localises to the cytoplasm. The enzyme catalyses GMP + ATP = GDP + ADP. In terms of biological role, essential for recycling GMP and indirectly, cGMP. The polypeptide is Guanylate kinase (Staphylococcus epidermidis (strain ATCC 35984 / DSM 28319 / BCRC 17069 / CCUG 31568 / BM 3577 / RP62A)).